The sequence spans 851 residues: Glycogen phosphorylase, liver form (851 aa).

Residue Ala2 is modified to N-acetylalanine. The residue at position 15 (Ser15) is a Phosphoserine; by PHK; in form phosphorylase a. Residues 43–45, Tyr76, and Arg310 each bind AMP; that span reads DRN. Position 364 is an N6-succinyllysine (Lys364). An N6-acetyllysine modification is found at Lys470. 3 positions are modified to phosphoserine: Ser524, Ser561, and Ser639. Position 681 is an N6-(pyridoxal phosphate)lysine (Lys681). Position 796 is an N6-acetyllysine (Lys796).

Belongs to the glycogen phosphorylase family. In terms of assembly, homodimer; enzymatically active. Interacts with PPP1R3B; recruits the phosphatase PP1 which dephosphorylates and inactivates PYGL/glycogen phosphorylase. The cofactor is pyridoxal 5'-phosphate. Acetylation, which is up-regulated by glucose and insulin and down-regulated by glucagon, inhibits the glycogen phosphorylase activity by promoting PPP1R3B-mediated recruitment of phosphatase PP1 and Ser-15 dephosphorylation. Post-translationally, phosphorylation at Ser-15 converts inactive phosphorylase b into active phosphorylase a. Dephosphorylation of Ser-15 by phosphatase PP1 inactivates the enzyme.

It localises to the cytoplasm. It is found in the cytosol. It catalyses the reaction [(1-&gt;4)-alpha-D-glucosyl](n) + phosphate = [(1-&gt;4)-alpha-D-glucosyl](n-1) + alpha-D-glucose 1-phosphate. With respect to regulation, allosterically regulated through the non-covalent binding of metabolites, being activated by AMP and inhibited by ATP, ADP, and glucose-6-phosphate. The activity is also controlled by post-translational modifications including phosphorylation and acetylation. Functionally, allosteric enzyme that catalyzes the rate-limiting step in glycogen catabolism, the phosphorolytic cleavage of glycogen to produce glucose-1-phosphate, and plays a central role in maintaining cellular and organismal glucose homeostasis. This chain is Glycogen phosphorylase, liver form, found in Bos taurus (Bovine).